We begin with the raw amino-acid sequence, 218 residues long: Probable nicotinate-nucleotide adenylyltransferase (218 aa).

It belongs to the NadD family.

It carries out the reaction nicotinate beta-D-ribonucleotide + ATP + H(+) = deamido-NAD(+) + diphosphate. It functions in the pathway cofactor biosynthesis; NAD(+) biosynthesis; deamido-NAD(+) from nicotinate D-ribonucleotide: step 1/1. Functionally, catalyzes the reversible adenylation of nicotinate mononucleotide (NaMN) to nicotinic acid adenine dinucleotide (NaAD). In Halorhodospira halophila (strain DSM 244 / SL1) (Ectothiorhodospira halophila (strain DSM 244 / SL1)), this protein is Probable nicotinate-nucleotide adenylyltransferase.